We begin with the raw amino-acid sequence, 176 residues long: Large ribosomal subunit protein uL16 (176 aa).

The protein belongs to the universal ribosomal protein uL16 family.

The protein is Large ribosomal subunit protein uL16 of Sulfolobus acidocaldarius (strain ATCC 33909 / DSM 639 / JCM 8929 / NBRC 15157 / NCIMB 11770).